A 369-amino-acid chain; its full sequence is tRNA/tmRNA (uracil-C(5))-methyltransferase (369 aa).

Positions 190, 218, 223, 239, and 301 each coordinate S-adenosyl-L-methionine. Cys-326 functions as the Nucleophile in the catalytic mechanism. Glu-360 serves as the catalytic Proton acceptor.

It belongs to the class I-like SAM-binding methyltransferase superfamily. RNA M5U methyltransferase family. TrmA subfamily.

It catalyses the reaction uridine(54) in tRNA + S-adenosyl-L-methionine = 5-methyluridine(54) in tRNA + S-adenosyl-L-homocysteine + H(+). It carries out the reaction uridine(341) in tmRNA + S-adenosyl-L-methionine = 5-methyluridine(341) in tmRNA + S-adenosyl-L-homocysteine + H(+). In terms of biological role, dual-specificity methyltransferase that catalyzes the formation of 5-methyluridine at position 54 (m5U54) in all tRNAs, and that of position 341 (m5U341) in tmRNA (transfer-mRNA). The chain is tRNA/tmRNA (uracil-C(5))-methyltransferase from Vibrio vulnificus (strain YJ016).